The following is a 398-amino-acid chain: Calreticulin (398 aa).

Positions 1-19 (MKAVVLVVVSLLALSSINC) are cleaved as a signal peptide. Residues 20–197 (DVFFEEKFPD…NEKVESGDLE (178 aa)) are N-domain. Cys105 and Cys137 are joined by a disulfide. 4 residues coordinate an alpha-D-glucoside: Tyr109, Lys111, Tyr128, and Asp135. Tandem repeats lie at residues 191–202 (VESGDLEADWDF), 210–221 (DPEAKKPEDWDD), 227–238 (DPEDKKPEDWDK), 244–255 (DPDATKPEDWDD), 259–269 (GEWEPPMIDNP), 273–283 (GVWAPKQIDNP), and 287–297 (GPWVHPEIDNP). The tract at residues 191–255 (VESGDLEADW…DATKPEDWDD (65 aa)) is 4 X approximate repeats. The tract at residues 198-308 (ADWDFLPNKK…YTPDSNLYKR (111 aa)) is P-domain. Over residues 207–251 (KIKDPEAKKPEDWDDKPTIPDPEDKKPEDWDKPEHIPDPDATKPE) the composition is skewed to basic and acidic residues. Positions 207–257 (KIKDPEAKKPEDWDDKPTIPDPEDKKPEDWDKPEHIPDPDATKPEDWDDEM) are disordered. The tract at residues 259–297 (GEWEPPMIDNPDYKGVWAPKQIDNPAYKGPWVHPEIDNP) is 3 X approximate repeats. A C-domain region spans residues 309–398 (DEICAVGLDL…AAPVEEHDEL (90 aa)). Asp317 provides a ligand contact to an alpha-D-glucoside. The disordered stretch occupies residues 334 to 398 (DDPAAAKERG…AAPVEEHDEL (65 aa)). The span at 337–372 (AAAKERGEVIKKRQEGEKKMKSEQDEAEREKEKAEK) shows a compositional bias: basic and acidic residues. Acidic residues predominate over residues 373-387 (PDDEEDDEDLDDETG). The Prevents secretion from ER signature appears at 395-398 (HDEL).

Belongs to the calreticulin family. In terms of assembly, monomer. In terms of tissue distribution, expressed in fat bodies. Not expressed in midgut, silk gland, ovary or testis.

The protein resides in the endoplasmic reticulum lumen. Molecular calcium-binding chaperone promoting folding, oligomeric assembly and quality control in the ER via the calreticulin/calnexin cycle. This lectin may interact transiently with almost all of the monoglucosylated glycoproteins that are synthesized in the ER. The chain is Calreticulin from Bombyx mori (Silk moth).